Consider the following 2199-residue polypeptide: DNA polymerase epsilon catalytic subunit A (2199 aa).

C2069, C2072, C2104, and C2107 together coordinate Zn(2+). The CysA-type zinc finger occupies 2069–2107; the sequence is CKQCGVHQDFDLCLHEHLWPTRDDMGTLVFSDGWSCSSC. Residues C2138, C2141, C2153, and C2155 each contribute to the [4Fe-4S] cluster site. Positions 2138–2155 match the CysB motif motif; it reads CSKCKTVKQWSLKERCSC.

The protein belongs to the DNA polymerase type-B family. As to quaternary structure, heterotetramer. Consists of 4 subunits: pol2, dpb2, dpb3 and dpb4. [4Fe-4S] cluster serves as cofactor.

The protein localises to the nucleus. The enzyme catalyses DNA(n) + a 2'-deoxyribonucleoside 5'-triphosphate = DNA(n+1) + diphosphate. In terms of biological role, DNA polymerase II participates in chromosomal DNA replication. The sequence is that of DNA polymerase epsilon catalytic subunit A (pol2) from Schizosaccharomyces pombe (strain 972 / ATCC 24843) (Fission yeast).